The primary structure comprises 261 residues: Probable septum site-determining protein MinC (261 aa).

Residues 106–144 (RAPAAKPADEAEPAAVPAVETAAAPAAAAAPEQSSDPAP) are disordered. A compositionally biased stretch (low complexity) spans 118–144 (PAAVPAVETAAAPAAAAAPEQSSDPAP).

Belongs to the MinC family. As to quaternary structure, interacts with MinD and FtsZ.

Its function is as follows. Cell division inhibitor that blocks the formation of polar Z ring septums. Rapidly oscillates between the poles of the cell to destabilize FtsZ filaments that have formed before they mature into polar Z rings. Prevents FtsZ polymerization. The chain is Probable septum site-determining protein MinC from Burkholderia orbicola (strain MC0-3).